The primary structure comprises 446 residues: N-succinylarginine dihydrolase (446 aa).

Substrate is bound by residues 19 to 28 (AGLSFGNVAS), Asn110, and 137 to 138 (HR). Glu174 is an active-site residue. Arg213 contacts substrate. The active site involves His249. Substrate is bound by residues Asp251 and Asn364. Cys370 acts as the Nucleophile in catalysis.

It belongs to the succinylarginine dihydrolase family. Homodimer.

The enzyme catalyses N(2)-succinyl-L-arginine + 2 H2O + 2 H(+) = N(2)-succinyl-L-ornithine + 2 NH4(+) + CO2. The protein operates within amino-acid degradation; L-arginine degradation via AST pathway; L-glutamate and succinate from L-arginine: step 2/5. Its function is as follows. Catalyzes the hydrolysis of N(2)-succinylarginine into N(2)-succinylornithine, ammonia and CO(2). This Burkholderia mallei (strain NCTC 10247) protein is N-succinylarginine dihydrolase.